We begin with the raw amino-acid sequence, 521 residues long: Acetylcholine receptor subunit beta-like 1 (521 aa).

The signal sequence occupies residues 1–24 (MESSCKSWLLCSILVLVAFSLVSA). Residues 25-235 (SEDEERLVRD…ITFYIIIRRK (211 aa)) lie on the Extracellular side of the membrane. An N-linked (GlcNAc...) asparagine glycan is attached at Asn48. Cys152 and Cys166 are disulfide-bonded. Helical transmembrane passes span 236–260 (TLFY…VFYL), 268–286 (VTLG…LLVS), and 302–323 (YLLF…IINW). At 324 to 481 (NFRGPRTHRM…WKYVAMVIDR (158 aa)) the chain is on the cytoplasmic side. The helical transmembrane segment at 482 to 500 (LQLYIFFIVTTAGTVGILM) threads the bilayer.

Belongs to the ligand-gated ion channel (TC 1.A.9) family. Acetylcholine receptor (TC 1.A.9.1) subfamily. CNS in embryos.

The protein localises to the postsynaptic cell membrane. It localises to the cell membrane. In terms of biological role, after binding acetylcholine, the AChR responds by an extensive change in conformation that affects all subunits and leads to opening of an ion-conducting channel across the plasma membrane. This Drosophila melanogaster (Fruit fly) protein is Acetylcholine receptor subunit beta-like 1 (nAChRbeta1).